Consider the following 181-residue polypeptide: Inner membrane-spanning protein YciB (181 aa).

5 helical membrane-spanning segments follow: residues 10–30 (LIIF…GALI), 50–70 (MQLI…ALHD), 80–100 (IVYV…KPAI), 120–140 (WAWV…AYHL), and 148–168 (FKVF…GGYI).

Belongs to the YciB family.

It is found in the cell inner membrane. In terms of biological role, plays a role in cell envelope biogenesis, maintenance of cell envelope integrity and membrane homeostasis. The chain is Inner membrane-spanning protein YciB from Vibrio cholerae serotype O1 (strain ATCC 39315 / El Tor Inaba N16961).